The primary structure comprises 112 residues: Tyrosine-protein phosphatase 17 (112 aa).

The 112-residue stretch at 1 to 112 (WRMIWEHECC…QPHTAGPIVV (112 aa)) folds into the Tyrosine-protein phosphatase domain. Substrate is bound at residue aspartate 82.

This sequence belongs to the protein-tyrosine phosphatase family.

The enzyme catalyses O-phospho-L-tyrosyl-[protein] + H2O = L-tyrosyl-[protein] + phosphate. This Styela plicata (Wrinkled sea squirt) protein is Tyrosine-protein phosphatase 17 (STY-17).